The sequence spans 476 residues: NAC domain-containing protein 86 (476 aa).

The NAC domain maps to 6–157; that stretch reads LPPGFRFHPT…AYALCRVFKK (152 aa). The DNA-binding element occupies 105-163; that stretch reads IGTKKTLVYYRGRAPHGIRTGWVMHEYRLDESECEPSAFGMQDAYALCRVFKKIVIEAK.

In terms of tissue distribution, expressed in a few sieve element cells before enucleation and in phloem-pole pericycle cells.

It is found in the nucleus. Its function is as follows. Transcription factor directing sieve element enucleation and cytosol degradation. Not required for formation of lytic vacuoles. Regulates, with NAC045, the transcription of NEN1, NEN2, NEN3, NEN4, RTM1, RTM2, UBP16, PLDZETA, ABCB10 and At1g26450. This Arabidopsis thaliana (Mouse-ear cress) protein is NAC domain-containing protein 86.